The sequence spans 210 residues: HTH-type transcriptional repressor FabR (210 aa).

The HTH tetR-type domain occupies 10-70 (KTRRSLVEAA…TMVDESGLML (61 aa)). A DNA-binding region (H-T-H motif) is located at residues 33-52 (SLREVAREAGIAPTSFYRHF).

Homodimer.

It is found in the cytoplasm. Its function is as follows. Represses the transcription of fabB, involved in unsaturated fatty acid (UFA) biosynthesis. By controlling UFA production, FabR directly influences the physical properties of the membrane bilayer. This is HTH-type transcriptional repressor FabR from Salmonella arizonae (strain ATCC BAA-731 / CDC346-86 / RSK2980).